We begin with the raw amino-acid sequence, 234 residues long: ATP-dependent dethiobiotin synthetase BioD (234 aa).

12-17 (DVGKTI) is an ATP binding site. Position 16 (Thr16) interacts with Mg(2+). Lys37 is an active-site residue. Thr41 contributes to the substrate binding site. ATP contacts are provided by residues Asp54 and 115–118 (EGAG). Mg(2+) contacts are provided by Asp54 and Glu115.

The protein belongs to the dethiobiotin synthetase family. Homodimer. It depends on Mg(2+) as a cofactor.

The protein localises to the cytoplasm. It carries out the reaction (7R,8S)-7,8-diammoniononanoate + CO2 + ATP = (4R,5S)-dethiobiotin + ADP + phosphate + 3 H(+). The protein operates within cofactor biosynthesis; biotin biosynthesis; biotin from 7,8-diaminononanoate: step 1/2. Functionally, catalyzes a mechanistically unusual reaction, the ATP-dependent insertion of CO2 between the N7 and N8 nitrogen atoms of 7,8-diaminopelargonic acid (DAPA, also called 7,8-diammoniononanoate) to form a ureido ring. The protein is ATP-dependent dethiobiotin synthetase BioD of Lysinibacillus sphaericus (strain C3-41).